We begin with the raw amino-acid sequence, 429 residues long: Adenylosuccinate synthetase (429 aa).

Residues 12 to 18 (GDEGKGK) and 40 to 42 (GHT) contribute to the GTP site. Asp13 (proton acceptor) is an active-site residue. Residues Asp13 and Gly40 each coordinate Mg(2+). Residues 13–16 (DEGK), 38–41 (NAGH), Thr128, Arg142, Gln223, Thr238, and Arg302 contribute to the IMP site. His41 (proton donor) is an active-site residue. 298 to 304 (VNTGRPR) serves as a coordination point for substrate. GTP contacts are provided by residues Arg304, 330–332 (KLD), and 412–414 (GVG).

It belongs to the adenylosuccinate synthetase family. Homodimer. Mg(2+) is required as a cofactor.

It localises to the cytoplasm. It catalyses the reaction IMP + L-aspartate + GTP = N(6)-(1,2-dicarboxyethyl)-AMP + GDP + phosphate + 2 H(+). It participates in purine metabolism; AMP biosynthesis via de novo pathway; AMP from IMP: step 1/2. Its function is as follows. Plays an important role in the de novo pathway of purine nucleotide biosynthesis. Catalyzes the first committed step in the biosynthesis of AMP from IMP. This Kocuria rhizophila (strain ATCC 9341 / DSM 348 / NBRC 103217 / DC2201) protein is Adenylosuccinate synthetase.